A 467-amino-acid chain; its full sequence is MRLPREIGPIHFVGIGGIGMSGIAEVLCNLGYTVQGSDASEGANVVRLREKGVKVTVGHKAGNVNGADVLVVSTAIKRDNPELMAARAQRIPVVRRAEMLAELMRLKSCVAIAGTHGKTTTTSMVATLLDAGDFDPTVINGGIINAYGTNARLGAGEWMVVEADESDGTFLKLPTDVAIVTNVDAEHLDHFKTFDAVQDAFRSFVENVPFYGFAVMCIDHPVVQAMVGRIEDRRIITYGQNPQADVRLVDLAPNGGGSHFKVMFRNRKTDAAHEISDLVLPMPGPHNALNATAAIAVAHELGITDATIRKALAAFGGVKRRFTRTGEWNGVTVIDDYGHHPVEIAAVLKAARESTDGRVIAVVQPHRYTRLQALFEEFCTCFNDADTVVVADVYPAGETPIVGIDRDHFVLGLRAHGHREVVPLPESAALAGIIADLAKQGDYVVCLGAGNITQWAYALPGELKALG.

Residue 114–120 (GTHGKTT) participates in ATP binding.

This sequence belongs to the MurCDEF family.

The protein localises to the cytoplasm. The catalysed reaction is UDP-N-acetyl-alpha-D-muramate + L-alanine + ATP = UDP-N-acetyl-alpha-D-muramoyl-L-alanine + ADP + phosphate + H(+). The protein operates within cell wall biogenesis; peptidoglycan biosynthesis. Its function is as follows. Cell wall formation. This chain is UDP-N-acetylmuramate--L-alanine ligase, found in Nitrobacter winogradskyi (strain ATCC 25391 / DSM 10237 / CIP 104748 / NCIMB 11846 / Nb-255).